The sequence spans 162 residues: uncharacterized protein (162 aa).

Residues 1–34 (MAREVISTSILMIATVVAVTAAIMVILPAVKDLA) form the signal peptide.

This is an uncharacterized protein from Archaeoglobus fulgidus (strain ATCC 49558 / DSM 4304 / JCM 9628 / NBRC 100126 / VC-16).